A 112-amino-acid polypeptide reads, in one-letter code: NADH-quinone oxidoreductase subunit K (112 aa).

The next 3 membrane-spanning stretches (helical) occupy residues 14–34 (LEGY…GALI), 39–59 (VVVF…LVAF), and 76–96 (LIIA…LAIF).

The protein belongs to the complex I subunit 4L family. In terms of assembly, NDH-1 is composed of 14 different subunits. Subunits NuoA, H, J, K, L, M, N constitute the membrane sector of the complex.

It is found in the cell membrane. The enzyme catalyses a quinone + NADH + 5 H(+)(in) = a quinol + NAD(+) + 4 H(+)(out). In terms of biological role, NDH-1 shuttles electrons from NADH, via FMN and iron-sulfur (Fe-S) centers, to quinones in the respiratory chain. The immediate electron acceptor for the enzyme in this species is believed to be a menaquinone. Couples the redox reaction to proton translocation (for every two electrons transferred, four hydrogen ions are translocated across the cytoplasmic membrane), and thus conserves the redox energy in a proton gradient. The polypeptide is NADH-quinone oxidoreductase subunit K (Rubrobacter xylanophilus (strain DSM 9941 / JCM 11954 / NBRC 16129 / PRD-1)).